Here is a 20-residue protein sequence, read N- to C-terminus: Snaclec ophioluxin subunit alpha (20 aa).

A disulfide bridge connects residues Cys-4 and Cys-15. One can recognise a C-type lectin domain in the interval Tyr-11 to Asn-20.

It belongs to the snaclec family. As to quaternary structure, heterodimer of subunits alpha and beta; disulfide-linked. Expressed by the venom gland.

The protein localises to the secreted. Its function is as follows. Binds to the platelet and collagen receptor glycoprotein VI (GP6) and activates platelet aggregation. This Ophiophagus hannah (King cobra) protein is Snaclec ophioluxin subunit alpha.